Here is a 608-residue protein sequence, read N- to C-terminus: Kelch-like protein 10 (608 aa).

Residues 39 to 106 enclose the BTB domain; sequence CDVVIKVNGF…AYTRTVPITP (68 aa). Kelch repeat units lie at residues 292–339, 340–386, 388–433, 434–480, 481–527, and 529–574; these read ILFA…YLKG, YVYI…VLSN, IYAM…TLYG, KVYI…AYGE, HVYA…VVDD, and LFVV…VVPG. Serine 501 is subject to Phosphoserine.

In terms of assembly, self-associates. Interacts with CUL3; indicative for the participation in an E3 ubiquitin ligase complex.

The protein resides in the cytoplasm. The protein operates within protein modification; protein ubiquitination. May be a substrate-specific adapter of a CUL3-based E3 ubiquitin-protein ligase complex which mediates the ubiquitination and subsequent proteasomal degradation of target proteins during spermatogenesis. This is Kelch-like protein 10 (Klhl10) from Rattus norvegicus (Rat).